We begin with the raw amino-acid sequence, 416 residues long: Gamma-glutamyl phosphate reductase (416 aa).

Belongs to the gamma-glutamyl phosphate reductase family.

It localises to the cytoplasm. The catalysed reaction is L-glutamate 5-semialdehyde + phosphate + NADP(+) = L-glutamyl 5-phosphate + NADPH + H(+). The protein operates within amino-acid biosynthesis; L-proline biosynthesis; L-glutamate 5-semialdehyde from L-glutamate: step 2/2. Its function is as follows. Catalyzes the NADPH-dependent reduction of L-glutamate 5-phosphate into L-glutamate 5-semialdehyde and phosphate. The product spontaneously undergoes cyclization to form 1-pyrroline-5-carboxylate. The polypeptide is Gamma-glutamyl phosphate reductase (Vibrio cholerae serotype O1 (strain ATCC 39541 / Classical Ogawa 395 / O395)).